The following is a 347-amino-acid chain: Selenide, water dikinase (347 aa).

Cys-17 is an active-site residue. ATP-binding positions include Lys-20 and 48–50 (TRD). Asp-51 contributes to the Mg(2+) binding site. ATP contacts are provided by residues Asp-68, Asp-91, and 139–141 (GHS). Asp-91 contributes to the Mg(2+) binding site. Mg(2+) is bound at residue Asp-227.

Belongs to the selenophosphate synthase 1 family. Class I subfamily. Homodimer. It depends on Mg(2+) as a cofactor.

The catalysed reaction is hydrogenselenide + ATP + H2O = selenophosphate + AMP + phosphate + 2 H(+). Synthesizes selenophosphate from selenide and ATP. This Salmonella typhimurium (strain LT2 / SGSC1412 / ATCC 700720) protein is Selenide, water dikinase.